Here is a 715-residue protein sequence, read N- to C-terminus: Polyribonucleotide nucleotidyltransferase (715 aa).

Asp487 and Asp493 together coordinate Mg(2+). Residues 554–613 (PRLYTFKINPEKIRDVIGKGGAVIRALTEETGTTIDIQDDGTITIAATSGEAAAAARSRI) form the KH domain. Residues 623-691 (GKIYEGTVLK…DRGRVKLSMK (69 aa)) form the S1 motif domain.

This sequence belongs to the polyribonucleotide nucleotidyltransferase family. It depends on Mg(2+) as a cofactor.

It localises to the cytoplasm. It carries out the reaction RNA(n+1) + phosphate = RNA(n) + a ribonucleoside 5'-diphosphate. In terms of biological role, involved in mRNA degradation. Catalyzes the phosphorolysis of single-stranded polyribonucleotides processively in the 3'- to 5'-direction. This chain is Polyribonucleotide nucleotidyltransferase, found in Dechloromonas aromatica (strain RCB).